The chain runs to 198 residues: Rac-like GTP-binding protein ARAC3 (198 aa).

Residues 13–21, 31–38, 60–64, and 118–121 contribute to the GTP site; these read GDGAVGKTC, FPTDYVPT, DTAGQ, and TKLD. Positions 35 to 43 match the Effector region motif; the sequence is YVPTVFDNF. Residue C158 is the site of S-palmitoyl cysteine attachment. The residue at position 195 (C195) is a Cysteine methyl ester. A lipid anchor (S-geranylgeranyl cysteine) is attached at C195. A propeptide spans 196-198 (removed in mature form); it reads SIL.

Belongs to the small GTPase superfamily. Rho family. In terms of assembly, interacts with Rho GDP-dissociation inhibitor 1 and ICR1. Binds to SPK1 when in the inactive GDP-bound form. Ubiquitous. Preferentially expressed at the tip of root hairs.

It localises to the cytoplasm. Its subcellular location is the cell membrane. Functionally, inactive GDP-bound Rho GTPases reside in the cytosol, are found in a complex with Rho GDP-dissociation inhibitors (Rho GDIs), and are released from the GDI protein in order to translocate to membranes upon activation. Involved in cell polarity control during the actin-dependent tip growth of root hairs, thus regulating root hair length and root hair initiation. Contributes, in a SPK1-dependent manner, to the prevention of cortical microtubules organization into parallel arrays oriented perpendicular to the axis of cell elongation to limit anisotropic cell growth during petal development. SPK1-dependent activation is required for auxin-mediated inhibition of PIN2 internalization during gravitropic responses. This Arabidopsis thaliana (Mouse-ear cress) protein is Rac-like GTP-binding protein ARAC3.